Reading from the N-terminus, the 410-residue chain is Acetate kinase (410 aa).

Residue asparagine 7 participates in Mg(2+) binding. Lysine 14 contacts ATP. Arginine 98 provides a ligand contact to substrate. The active-site Proton donor/acceptor is aspartate 155. Residues 215-219 (HLGNG), 290-292 (DMR), and 338-342 (GIGEN) contribute to the ATP site. Mg(2+) is bound at residue glutamate 392.

It belongs to the acetokinase family. In terms of assembly, homodimer. The cofactor is Mg(2+). Requires Mn(2+) as cofactor.

The protein localises to the cytoplasm. It catalyses the reaction acetate + ATP = acetyl phosphate + ADP. It participates in metabolic intermediate biosynthesis; acetyl-CoA biosynthesis; acetyl-CoA from acetate: step 1/2. Functionally, catalyzes the formation of acetyl phosphate from acetate and ATP. Can also catalyze the reverse reaction. This is Acetate kinase from Kocuria rhizophila (strain ATCC 9341 / DSM 348 / NBRC 103217 / DC2201).